The sequence spans 141 residues: Large ribosomal subunit protein uL14 (141 aa).

This sequence belongs to the universal ribosomal protein uL14 family. Part of the 50S ribosomal subunit. Forms a cluster with proteins L3 and L24e, part of which may contact the 16S rRNA in 2 intersubunit bridges.

Functionally, binds to 23S rRNA. Forms part of two intersubunit bridges in the 70S ribosome. The polypeptide is Large ribosomal subunit protein uL14 (Pyrococcus abyssi (strain GE5 / Orsay)).